Here is a 259-residue protein sequence, read N- to C-terminus: NADPH-dependent reductase BacG (259 aa).

NADP(+) contacts are provided by residues 12-15 (SQGI), 34-36 (SRN), 62-63 (DM), Ile-90, Lys-113, and 185-191 (GFIATDR).

It belongs to the short-chain dehydrogenases/reductases (SDR) family. Homodimer.

Its subcellular location is the cytoplasm. Its pathway is antibiotic biosynthesis; bacilysin biosynthesis. Along with the bacABCDEF operon, BacG is involved in the biosynthesis of the nonribosomally synthesized dipeptide antibiotic bacilysin, composed of L-alanine and L-anticapsin. Bacilysin is an irreversible inactivator of the glutaminase domain of glucosamine synthetase. BacG catalyzes the stereoselective reduction of exocyclic-delta(3),delta(5)-dihydro-hydroxyphenylpyruvate (ex-H2HPP), adding a pro-S hydride equivalent to C4 position to yield tetrahydro-hydroxyphenylpyruvate (H4HPP). Although the 3Z,7R-ex-H2HPP isomer is kinetically disfavored by BacB and produced in a smaller quantity than 3E,7R-ex-H2HPP, it is the preferred substrate for the conjugate reduction reaction of BacG. This is NADPH-dependent reductase BacG from Bacillus subtilis (strain 168).